The primary structure comprises 130 residues: Large ribosomal subunit protein bL17 (130 aa).

Belongs to the bacterial ribosomal protein bL17 family. Part of the 50S ribosomal subunit. Contacts protein L32.

The protein is Large ribosomal subunit protein bL17 of Delftia acidovorans (strain DSM 14801 / SPH-1).